The primary structure comprises 386 residues: Putative 8-amino-7-oxononanoate synthase 2 (386 aa).

R21 lines the substrate pocket. Position 104-105 (104-105 (GY)) interacts with pyridoxal 5'-phosphate. H129 provides a ligand contact to substrate. Residues S176, 201 to 204 (DDAH), and 230 to 233 (TLSK) each bind pyridoxal 5'-phosphate. K233 carries the N6-(pyridoxal phosphate)lysine modification.

The protein belongs to the class-II pyridoxal-phosphate-dependent aminotransferase family. BioF subfamily. In terms of assembly, homodimer. Pyridoxal 5'-phosphate is required as a cofactor.

The enzyme catalyses 6-carboxyhexanoyl-[ACP] + L-alanine + H(+) = (8S)-8-amino-7-oxononanoate + holo-[ACP] + CO2. The protein operates within cofactor biosynthesis; biotin biosynthesis. In terms of biological role, catalyzes the decarboxylative condensation of pimeloyl-[acyl-carrier protein] and L-alanine to produce 8-amino-7-oxononanoate (AON), [acyl-carrier protein], and carbon dioxide. The polypeptide is Putative 8-amino-7-oxononanoate synthase 2 (bioF) (Bacillus velezensis (strain DSM 23117 / BGSC 10A6 / LMG 26770 / FZB42) (Bacillus amyloliquefaciens subsp. plantarum)).